Reading from the N-terminus, the 75-residue chain is Metallothionein-like protein 1 (75 aa).

This sequence belongs to the metallothionein superfamily. Type 15 family.

Its function is as follows. Metallothioneins have a high content of cysteine residues that bind various heavy metals. The sequence is that of Metallothionein-like protein 1 from Cicer arietinum (Chickpea).